The primary structure comprises 96 residues: MHVTLVEINVHDDKVEQFIDVFRQNHLGSIKEPGNLRFDVLQDPQVLTRFYIYEAYVDEQAVAFHKTTPHYKTCVEQLEPLMTGPRTKKVFMGLMP.

Residues 2 to 91 form the ABM domain; that stretch reads HVTLVEINVH…MTGPRTKKVF (90 aa).

This sequence belongs to the LsrG family. In terms of assembly, homodimer.

It is found in the cytoplasm. The catalysed reaction is (2S)-2-hydroxy-3,4-dioxopentyl phosphate = 3-hydroxy-2,4-dioxopentyl phosphate. Involved in the degradation of phospho-AI-2, thereby terminating induction of the lsr operon and closing the AI-2 signaling cycle. Catalyzes the conversion of (4S)-4-hydroxy-5-phosphonooxypentane-2,3-dione (P-DPD) to 3-hydroxy-5-phosphonooxypentane-2,4-dione (P-HPD). The protein is (4S)-4-hydroxy-5-phosphonooxypentane-2,3-dione isomerase of Salmonella typhimurium (strain LT2 / SGSC1412 / ATCC 700720).